The chain runs to 103 residues: Small ribosomal subunit protein uS10 (103 aa).

It belongs to the universal ribosomal protein uS10 family. In terms of assembly, part of the 30S ribosomal subunit.

In terms of biological role, involved in the binding of tRNA to the ribosomes. This Chromohalobacter salexigens (strain ATCC BAA-138 / DSM 3043 / CIP 106854 / NCIMB 13768 / 1H11) protein is Small ribosomal subunit protein uS10.